The chain runs to 240 residues: Phosphatidylserine decarboxylase proenzyme (240 aa).

Catalysis depends on serine 205, which acts as the Schiff-base intermediate with substrate; via pyruvic acid. Position 205 is a pyruvic acid (Ser); by autocatalysis (serine 205).

Belongs to the phosphatidylserine decarboxylase family. PSD-A subfamily. In terms of assembly, heterodimer of a large membrane-associated beta subunit and a small pyruvoyl-containing alpha subunit. Requires pyruvate as cofactor. Post-translationally, is synthesized initially as an inactive proenzyme. Formation of the active enzyme involves a self-maturation process in which the active site pyruvoyl group is generated from an internal serine residue via an autocatalytic post-translational modification. Two non-identical subunits are generated from the proenzyme in this reaction, and the pyruvate is formed at the N-terminus of the alpha chain, which is derived from the carboxyl end of the proenzyme. The post-translation cleavage follows an unusual pathway, termed non-hydrolytic serinolysis, in which the side chain hydroxyl group of the serine supplies its oxygen atom to form the C-terminus of the beta chain, while the remainder of the serine residue undergoes an oxidative deamination to produce ammonia and the pyruvoyl prosthetic group on the alpha chain.

Its subcellular location is the cell membrane. The catalysed reaction is a 1,2-diacyl-sn-glycero-3-phospho-L-serine + H(+) = a 1,2-diacyl-sn-glycero-3-phosphoethanolamine + CO2. It functions in the pathway phospholipid metabolism; phosphatidylethanolamine biosynthesis; phosphatidylethanolamine from CDP-diacylglycerol: step 2/2. Its function is as follows. Catalyzes the formation of phosphatidylethanolamine (PtdEtn) from phosphatidylserine (PtdSer). The chain is Phosphatidylserine decarboxylase proenzyme from Rhodopirellula baltica (strain DSM 10527 / NCIMB 13988 / SH1).